Here is a 688-residue protein sequence, read N- to C-terminus: MGSAESKISFRHAILASLNTKPEREIYEFLFTCNLTENDVFSFILAQDIRICRDSNKFDNLAILLQVCVLNIVSIQNKFSEQYPLKKNALLNSFLILTRLLPYLYESTNSSNWVRTYFQKDFSQTVDDLKPLLSELGLNYEIELPNSFSNLTSLLSSTFQLCFQHEFTVSKYASSEESIWSAGIAIPEIAHPPSYDHRLHQSLLSCFLVVLLSNTLYDSIDELDFSVLNSIVSLDAKDIYIRVICSFVNTGFIDSTNWFLNSFNQRRNSLQLYSSWFIILILSDARIKENTHLYANGEGQHIKNHLLELFKKLHRTQDFLIIAESINKFLSNPLKKERQIITFMGDFKRCVVESLCFLFLLLTNQPRFTDELVNFKSSNEMMMNLLFIHVKYSGDTENSYMSSLAGYCLQQLVSHEKLVKAACHIDKSLISPSPSSQFPVFDTSVAIYVIQVLCTLENPSSIEYNIISNILFSIPTIPLKNASPIVELISYVMKPEFFMKSQQNASDCKKLLSSFLYFLINNFNDNLHIIELLQKDKRKFEPIIAWSETEFSEFFVTSNISQSALDNGLVDQAGLDEQKWYEKWFHDLNIPLLRKCLTLRTDKNPFIEQPDEPNVTKKIYRVTYTDALQRWNLVNIWRHIFKETVTLNSGISCPWYGTNVKLFTVREVRQPTILQSRSLGEFQGRLFS.

The protein belongs to the hid-1 family.

It localises to the cytoplasm. It is found in the nucleus. The polypeptide is Hid-1 family protein P19A11.07c (Schizosaccharomyces pombe (strain 972 / ATCC 24843) (Fission yeast)).